We begin with the raw amino-acid sequence, 820 residues long: Chitinase A (820 aa).

The first 21 residues, 1–21 (MKLNKITSYIGFALLSGGALA), serve as a signal peptide directing secretion. The GH18 domain maps to 158–588 (RVTGAYFVEW…NAMYDGLTAG (431 aa)). Residue E313 is the Proton donor of the active site.

It belongs to the glycosyl hydrolase 18 family. Chitinase class II subfamily.

It catalyses the reaction Random endo-hydrolysis of N-acetyl-beta-D-glucosaminide (1-&gt;4)-beta-linkages in chitin and chitodextrins.. With respect to regulation, stimulated by magnesium ions; inhibited by N-bromosuccinimide and 2-hydroxy-5-nitrobenzyl bromide. The protein is Chitinase A (chiA) of Pseudoalteromonas piscicida.